Reading from the N-terminus, the 174-residue chain is NADH-quinone oxidoreductase subunit B 2 (174 aa).

Cys38, Cys39, Cys104, and Cys133 together coordinate [4Fe-4S] cluster.

It belongs to the complex I 20 kDa subunit family. As to quaternary structure, NDH-1 is composed of 14 different subunits. Subunits NuoB, C, D, E, F, and G constitute the peripheral sector of the complex. [4Fe-4S] cluster is required as a cofactor.

The protein resides in the cell membrane. It carries out the reaction a quinone + NADH + 5 H(+)(in) = a quinol + NAD(+) + 4 H(+)(out). In terms of biological role, NDH-1 shuttles electrons from NADH, via FMN and iron-sulfur (Fe-S) centers, to quinones in the respiratory chain. The immediate electron acceptor for the enzyme in this species is believed to be ubiquinone. Couples the redox reaction to proton translocation (for every two electrons transferred, four hydrogen ions are translocated across the cytoplasmic membrane), and thus conserves the redox energy in a proton gradient. This Chloroflexus aurantiacus (strain ATCC 29366 / DSM 635 / J-10-fl) protein is NADH-quinone oxidoreductase subunit B 2.